The primary structure comprises 295 residues: 3-methyl-2-oxobutanoate hydroxymethyltransferase (295 aa).

Positions 53 and 92 each coordinate Mg(2+). Residues 53-54 (DS), Asp92, and Lys122 each bind 3-methyl-2-oxobutanoate. Glu124 contributes to the Mg(2+) binding site. Glu191 (proton acceptor) is an active-site residue.

It belongs to the PanB family. Homodecamer; pentamer of dimers. The cofactor is Mg(2+).

Its subcellular location is the cytoplasm. It carries out the reaction 3-methyl-2-oxobutanoate + (6R)-5,10-methylene-5,6,7,8-tetrahydrofolate + H2O = 2-dehydropantoate + (6S)-5,6,7,8-tetrahydrofolate. It participates in cofactor biosynthesis; (R)-pantothenate biosynthesis; (R)-pantoate from 3-methyl-2-oxobutanoate: step 1/2. Its function is as follows. Catalyzes the reversible reaction in which hydroxymethyl group from 5,10-methylenetetrahydrofolate is transferred onto alpha-ketoisovalerate to form ketopantoate. In Koribacter versatilis (strain Ellin345), this protein is 3-methyl-2-oxobutanoate hydroxymethyltransferase.